The following is an 862-amino-acid chain: Autotaxin (862 aa).

An N-terminal signal peptide occupies residues 1–27 (MARQGCFGSYQVISLFTFAIGVNLCLG). Residues 28-35 (FTASRIKR) constitute a propeptide, removed by furin. N53 carries N-linked (GlcNAc...) asparagine glycosylation. 2 consecutive SMB domains span residues 54-97 (TSGS…LKTA) and 98-142 (RGWE…GESH). Disulfide bonds link C58–C75, C62–C93, C73–C86, C79–C85, C102–C119, C107–C137, C117–C130, C123–C129, C148–C194, and C156–C350. The Cell attachment site signature appears at 126-128 (RGD). The tract at residues 144–501 (VDDDCEEIRV…PTFKYRTKVP (358 aa)) is phosphodiesterase domain. The Zn(2+) site is built by D171 and T209. Catalysis depends on T209, which acts as the Nucleophile. Residues T209, N230, and D311 each contribute to the 1-(9Z-octadecenoyl)-sn-glycero-3-phosphate site. 3 residues coordinate 1-hexadecanoyl-sn-glycero-3-phosphate: T209, N230, and D311. Residues T209, N230, and D311 each coordinate 1-tetradecanoyl-sn-glycerol 3-phosphate. The Zn(2+) site is built by D311, H315, D358, and H359. 5 disulfides stabilise this stretch: C366-C468, C413-C805, C566-C666, C568-C651, and C774-C784. A glycan (N-linked (GlcNAc...) asparagine) is linked at N410. H474 contacts Zn(2+). H474 serves as a coordination point for 1-(9Z-octadecenoyl)-sn-glycero-3-phosphate. Residue H474 participates in 1-hexadecanoyl-sn-glycero-3-phosphate binding. Position 474 (H474) interacts with 1-tetradecanoyl-sn-glycerol 3-phosphate. N-linked (GlcNAc...) asparagine glycosylation occurs at N524. The nuclease-like domain stretch occupies residues 597-862 (LYGRPAVLYR…TYLHTYESEI (266 aa)). Residues D739, N741, N743, L745, and D747 each contribute to the Ca(2+) site. N806 carries N-linked (GlcNAc...) asparagine glycosylation. Residues 829–850 (IEHLTGLDFYRKTSRSYSEILT) form a required for secretion region.

The protein belongs to the nucleotide pyrophosphatase/phosphodiesterase family. The cofactor is Zn(2+). Requires Ca(2+) as cofactor. N-glycosylation, but not furin-cleavage, plays a critical role on secretion and on lysoPLD activity. Secretion requires simultaneous glycosylation on Asn-53 and Asn-410, while probable glycosylation of Asn-410 has a preferential role on lysoPLD activity. Not O-glycosylated. In terms of processing, the interdomain disulfide bond between Cys-413 and Cys-805 is essential for catalytic activity. As to expression, expressed in brain and adipose tissue.

It is found in the secreted. It carries out the reaction a 1-O-alkyl-sn-glycero-3-phosphoethanolamine + H2O = a 1-O-alkyl-sn-glycero-3-phosphate + ethanolamine + H(+). The enzyme catalyses a 1-acyl-sn-glycero-3-phosphoethanolamine + H2O = a 1-acyl-sn-glycero-3-phosphate + ethanolamine + H(+). It catalyses the reaction 1-(9Z-octadecenoyl)-sn-glycero-3-phosphoethanolamine + H2O = 1-(9Z-octadecenoyl)-sn-glycero-3-phosphate + ethanolamine + H(+). The catalysed reaction is a 1-O-alkyl-sn-glycero-3-phosphocholine + H2O = a 1-O-alkyl-sn-glycero-3-phosphate + choline + H(+). It carries out the reaction 1-O-(9Z-octadecenyl)-sn-glycero-3-phosphocholine + H2O = 1-O-(9Z-octadecenyl)-sn-glycero-3-phosphate + choline + H(+). The enzyme catalyses 1-O-hexadecyl-sn-glycero-3-phosphocholine + H2O = 1-O-hexadecyl-sn-glycero-3-phosphate + choline + H(+). It catalyses the reaction a 1-O-(1Z-alkenyl)-sn-glycero-3-phosphocholine + H2O = a 1-O-(1Z-alkenyl)-sn-glycero-3-phosphate + choline + H(+). The catalysed reaction is a 1-acyl-sn-glycero-3-phosphocholine + H2O = a 1-acyl-sn-glycero-3-phosphate + choline + H(+). It carries out the reaction 1-dodecanoyl-sn-glycero-3-phosphocholine + H2O = 1-dodecanoyl-sn-glycerol 3-phosphate + choline + H(+). The enzyme catalyses 1-(9Z-octadecenoyl)-sn-glycero-3-phosphocholine + H2O = 1-(9Z-octadecenoyl)-sn-glycero-3-phosphate + choline + H(+). It catalyses the reaction 1-tetradecanoyl-sn-glycero-3-phosphocholine + H2O = 1-tetradecanoyl-sn-glycerol 3-phosphate + choline + H(+). The catalysed reaction is 1-decanoyl-sn-glycero-3-phosphocholine + H2O = 1-decanoyl-sn-glycero-3-phosphate + choline + H(+). It carries out the reaction 1-octadecanoyl-sn-glycero-3-phosphocholine + H2O = 1-octadecanoyl-sn-glycero-3-phosphate + choline + H(+). The enzyme catalyses 1-hexadecanoyl-sn-glycero-3-phosphocholine + H2O = 1-hexadecanoyl-sn-glycero-3-phosphate + choline + H(+). It catalyses the reaction 1-hexanoyl-sn-glycero-3-phosphocholine + H2O = 1-hexanoyl-sn-glycero-3-phosphate + choline + H(+). The catalysed reaction is 1-(9Z,12Z)-octadecadienoyl-sn-glycero-3-phosphocholine + H2O = 1-(9Z,12Z)-octadecadienoyl-sn-glycero-3-phosphate + choline + H(+). It carries out the reaction sphing-4-enine-phosphocholine + H2O = sphing-4-enine 1-phosphate + choline + H(+). The enzyme catalyses 1-(5Z,8Z,11Z,14Z-eicosatetraenoyl)-sn-glycero-3-phosphocholine + H2O = 1-(5Z,8Z,11Z,14Z-eicosatetraenoyl)-sn-glycero-3-phosphate + choline + H(+). It catalyses the reaction a 2-acyl-sn-glycero-3-phosphocholine + H2O = a 2-acyl-sn-glycerol 3-phosphate + choline + H(+). The catalysed reaction is a 1,2-diacyl-sn-glycero-3-phosphocholine + H2O = a 1,2-diacyl-sn-glycero-3-phosphate + choline + H(+). It carries out the reaction 1,2-dioctanoyl-sn-glycero-3-phosphocholine + H2O = 1,2-dioctanoyl-sn-glycero-3-phosphate + choline + H(+). The enzyme catalyses 1,2-didecanoyl-sn-glycero-3-phosphocholine + H2O = 1,2-didecanoyl-sn-glycero-3-phosphate + choline + H(+). It catalyses the reaction a 1-acyl-sn-glycero-3-phospho-L-serine + H2O = a 1-acyl-sn-glycero-3-phosphate + L-serine + H(+). The catalysed reaction is 1-(9Z-octadecenoyl)-sn-glycero-3-phospho-L-serine + H2O = 1-(9Z-octadecenoyl)-sn-glycero-3-phosphate + L-serine + H(+). It carries out the reaction a 2-acyl-sn-glycero-3-phospho-L-serine + H2O = a 2-acyl-sn-glycerol 3-phosphate + L-serine + H(+). Its activity is regulated as follows. Inhibited by EDTA and EGTA. Its function is as follows. Secreted lysophospholipase D that hydrolyzes lysophospholipids to produce the signaling molecule lysophosphatidic acid (LPA) in extracellular fluids. Its major substrate is lysophosphatidylcholine. Can also act on sphingosylphosphorylcholine producing sphingosine-1-phosphate, a modulator of cell motility. Can hydrolyze, in vitro, bis-pNPP, to some extent pNP-TMP, and barely ATP. Involved in several motility-related processes such as angiogenesis and neurite outgrowth. Acts as an angiogenic factor by stimulating migration of smooth muscle cells and microtubule formation. Stimulates migration of melanoma cells, probably via a pertussis toxin-sensitive G protein. May have a role in induction of parturition. Possible involvement in cell proliferation and adipose tissue development. Required for LPA production in activated platelets, cleaves the sn-1 lysophospholipids to generate sn-1 lysophosphatidic acids containing predominantly 18:2 and 20:4 fatty acids. Shows a preference for the sn-1 to the sn-2 isomer of 1-O-alkyl-sn-glycero-3-phosphocholine (lyso-PAF). This chain is Autotaxin, found in Mus musculus (Mouse).